The following is a 189-amino-acid chain: Probable nicotinate-nucleotide adenylyltransferase (189 aa).

Belongs to the NadD family.

It catalyses the reaction nicotinate beta-D-ribonucleotide + ATP + H(+) = deamido-NAD(+) + diphosphate. The protein operates within cofactor biosynthesis; NAD(+) biosynthesis; deamido-NAD(+) from nicotinate D-ribonucleotide: step 1/1. In terms of biological role, catalyzes the reversible adenylation of nicotinate mononucleotide (NaMN) to nicotinic acid adenine dinucleotide (NaAD). This is Probable nicotinate-nucleotide adenylyltransferase from Bacillus cereus (strain G9842).